The primary structure comprises 431 residues: Divergent protein kinase domain 1B (431 aa).

Over 1–30 the chain is Cytoplasmic; it reads MRRLRRLAHLVLFCPFSKRLQGRLPGLRVR. Positions 5 to 6 match the May mediate ER retention motif; that stretch reads RR. A helical membrane pass occupies residues 31-51; the sequence is CIFLAWLGVFAGSWLVYVHYS. Topologically, residues 52-431 are lumenal; that stretch reads SYSERCRGHV…WKKISNTKYS (380 aa). 2 disulfide bridges follow: C57-C94 and C62-C117.

This sequence belongs to the DIPK family. Post-translationally, among the many cysteines in the lumenal domain, most are probably involved in disulfide bonds.

Its subcellular location is the endoplasmic reticulum membrane. The chain is Divergent protein kinase domain 1B from Homo sapiens (Human).